Here is a 185-residue protein sequence, read N- to C-terminus: Ribosome-recycling factor (185 aa).

Belongs to the RRF family.

It localises to the cytoplasm. In terms of biological role, responsible for the release of ribosomes from messenger RNA at the termination of protein biosynthesis. May increase the efficiency of translation by recycling ribosomes from one round of translation to another. The polypeptide is Ribosome-recycling factor (Vibrio vulnificus (strain YJ016)).